Consider the following 521-residue polypeptide: NAD(P)H-quinone oxidoreductase subunit 2 (521 aa).

A run of 14 helical transmembrane segments spans residues 16 to 36 (ILPE…DLIG), 43 to 63 (WLPY…YTAW), 80 to 100 (LSIV…LMSI), 110 to 130 (LAEF…LSGA), 133 to 153 (LVMI…MTGY), 168 to 188 (LLIG…LYGL), 211 to 231 (LGLA…ISAV), 245 to 265 (PTPV…ALAI), 279 to 299 (WHLI…VVAL), 307 to 327 (MLAY…TAGT), 335 to 355 (VFYL…VILF), 379 to 399 (LGLS…GFFG), 401 to 421 (IYLF…LALV), and 467 to 487 (VGLV…NPLF).

It belongs to the complex I subunit 2 family. As to quaternary structure, NDH-1 can be composed of about 15 different subunits; different subcomplexes with different compositions have been identified which probably have different functions.

The protein localises to the cellular thylakoid membrane. It carries out the reaction a plastoquinone + NADH + (n+1) H(+)(in) = a plastoquinol + NAD(+) + n H(+)(out). The enzyme catalyses a plastoquinone + NADPH + (n+1) H(+)(in) = a plastoquinol + NADP(+) + n H(+)(out). In terms of biological role, NDH-1 shuttles electrons from an unknown electron donor, via FMN and iron-sulfur (Fe-S) centers, to quinones in the respiratory and/or the photosynthetic chain. The immediate electron acceptor for the enzyme in this species is believed to be plastoquinone. Couples the redox reaction to proton translocation, and thus conserves the redox energy in a proton gradient. Cyanobacterial NDH-1 also plays a role in inorganic carbon-concentration. The sequence is that of NAD(P)H-quinone oxidoreductase subunit 2 from Crocosphaera subtropica (strain ATCC 51142 / BH68) (Cyanothece sp. (strain ATCC 51142)).